The sequence spans 324 residues: Endochitinase A2 (324 aa).

An N-terminal signal peptide occupies residues 1–20 (MSKLRIPILLVLFIVSCCSA). The region spanning 21–61 (EQCGTQAGGALCPGGLCCSKFGWCGSTSEYCGDGCQSQCSG) is the Chitin-binding type-1 domain. Intrachain disulfides connect C23–C38, C32–C44, C37–C51, and C55–C59. The active-site Proton donor is E133. Cystine bridges form between C151/C170 and C269/C301. A propeptide spans 310–324 (SLPLSSILLDTVAAA) (removed in mature form).

The protein belongs to the glycosyl hydrolase 19 family. Chitinase class I subfamily.

It carries out the reaction Random endo-hydrolysis of N-acetyl-beta-D-glucosaminide (1-&gt;4)-beta-linkages in chitin and chitodextrins.. Its function is as follows. Defense against chitin-containing fungal pathogens. The sequence is that of Endochitinase A2 (CHI2) from Pisum sativum (Garden pea).